A 269-amino-acid polypeptide reads, in one-letter code: Imidazole glycerol phosphate synthase subunit HisF (269 aa).

Catalysis depends on residues D23 and D142.

It belongs to the HisA/HisF family. In terms of assembly, heterodimer of HisH and HisF.

It is found in the cytoplasm. The enzyme catalyses 5-[(5-phospho-1-deoxy-D-ribulos-1-ylimino)methylamino]-1-(5-phospho-beta-D-ribosyl)imidazole-4-carboxamide + L-glutamine = D-erythro-1-(imidazol-4-yl)glycerol 3-phosphate + 5-amino-1-(5-phospho-beta-D-ribosyl)imidazole-4-carboxamide + L-glutamate + H(+). It functions in the pathway amino-acid biosynthesis; L-histidine biosynthesis; L-histidine from 5-phospho-alpha-D-ribose 1-diphosphate: step 5/9. Functionally, IGPS catalyzes the conversion of PRFAR and glutamine to IGP, AICAR and glutamate. The HisF subunit catalyzes the cyclization activity that produces IGP and AICAR from PRFAR using the ammonia provided by the HisH subunit. The sequence is that of Imidazole glycerol phosphate synthase subunit HisF from Bordetella pertussis (strain Tohama I / ATCC BAA-589 / NCTC 13251).